The following is a 432-amino-acid chain: Histidine--tRNA ligase (432 aa).

This sequence belongs to the class-II aminoacyl-tRNA synthetase family. As to quaternary structure, homodimer.

The protein localises to the cytoplasm. It carries out the reaction tRNA(His) + L-histidine + ATP = L-histidyl-tRNA(His) + AMP + diphosphate + H(+). This is Histidine--tRNA ligase from Symbiobacterium thermophilum (strain DSM 24528 / JCM 14929 / IAM 14863 / T).